Consider the following 470-residue polypeptide: Glucose-1-phosphate adenylyltransferase (470 aa).

Alpha-D-glucose 1-phosphate-binding positions include glycine 164, glutamate 181–lysine 182, and serine 199.

It belongs to the bacterial/plant glucose-1-phosphate adenylyltransferase family. As to quaternary structure, homotetramer.

The enzyme catalyses alpha-D-glucose 1-phosphate + ATP + H(+) = ADP-alpha-D-glucose + diphosphate. It functions in the pathway glycan biosynthesis; glycogen biosynthesis. Its function is as follows. Involved in the biosynthesis of ADP-glucose, a building block required for the elongation reactions to produce glycogen. Catalyzes the reaction between ATP and alpha-D-glucose 1-phosphate (G1P) to produce pyrophosphate and ADP-Glc. The chain is Glucose-1-phosphate adenylyltransferase from Pseudarthrobacter chlorophenolicus (strain ATCC 700700 / DSM 12829 / CIP 107037 / JCM 12360 / KCTC 9906 / NCIMB 13794 / A6) (Arthrobacter chlorophenolicus).